A 403-amino-acid chain; its full sequence is D-alanyl-D-alanine carboxypeptidase DacA (403 aa).

The first 29 residues, 1-29 (MNTIFSARIMKRLALTTALCTAFISAAHA), serve as a signal peptide directing secretion. The Acyl-ester intermediate role is filled by serine 73. Catalysis depends on lysine 76, which acts as the Proton acceptor. Residue serine 139 is part of the active site. Lysine 242 is a substrate binding site.

The protein belongs to the peptidase S11 family.

It localises to the cell inner membrane. The enzyme catalyses Preferential cleavage: (Ac)2-L-Lys-D-Ala-|-D-Ala. Also transpeptidation of peptidyl-alanyl moieties that are N-acyl substituents of D-alanine.. The protein operates within cell wall biogenesis; peptidoglycan biosynthesis. Functionally, removes C-terminal D-alanyl residues from sugar-peptide cell wall precursors. The polypeptide is D-alanyl-D-alanine carboxypeptidase DacA (dacA) (Escherichia coli O157:H7).